A 550-amino-acid chain; its full sequence is Glucagon-like peptide 2 receptor (550 aa).

The Extracellular segment spans residues 1 to 173 (MRPQPSPAVP…SFRQNVDHYA (173 aa)). Cystine bridges form between Cys83–Cys105, Cys96–Cys137, and Cys118–Cys159. N-linked (GlcNAc...) asparagine glycosylation is found at Asn97, Asn113, Asn148, and Asn162. Residues 174-198 (LLYTLQLMYTVGYSVSLISLFLALT) form a helical membrane-spanning segment. Residues 199–210 (LFLFLRKLHCTR) lie on the Cytoplasmic side of the membrane. A helical transmembrane segment spans residues 211 to 235 (NYIHMNLFASFILKVLAVLVKDMVS). The Extracellular segment spans residues 236–261 (HNSYSKRPDDESGWMSYLSETSVSCR). A helical transmembrane segment spans residues 262 to 285 (SVQVLLHYFVGTNHLWLLVEGLYL). Over 286 to 299 (HTLLEPTVFPERRL) the chain is Cytoplasmic. A helical membrane pass occupies residues 300-321 (WPKYLVVGWAFPMLFVIPWGFA). At 322–339 (RAHLENTRCWATNGNLKI) the chain is on the extracellular side. A helical membrane pass occupies residues 340 to 362 (WWIIRGPMLLCVTVNFFIFLKIL). Residues 363–386 (KLLISKLKAHQMCFRDYKYRLAKS) are Cytoplasmic-facing. Residues 387–405 (TLLLIPLLGVHEVLFTFFP) form a helical membrane-spanning segment. Residues 406-417 (DDQVQGFSKRIR) lie on the Extracellular side of the membrane. Residues 418–438 (LFIQLTLSSVHGFLVALQYGF) traverse the membrane as a helical segment. The Cytoplasmic portion of the chain corresponds to 439–550 (ANGEVKAELR…MEEILEESEI (112 aa)).

Belongs to the G-protein coupled receptor 2 family.

The protein resides in the cell membrane. Functionally, this is a receptor for glucagon-like peptide 2. The activity of this receptor is mediated by G proteins which activate adenylyl cyclase. The protein is Glucagon-like peptide 2 receptor (Glp2r) of Rattus norvegicus (Rat).